Consider the following 318-residue polypeptide: Ribonuclease Z (318 aa).

Zn(2+) contacts are provided by His63, His65, Asp67, His68, His142, Asp210, and His268. Asp67 serves as the catalytic Proton acceptor.

This sequence belongs to the RNase Z family. In terms of assembly, homodimer. The cofactor is Zn(2+).

It carries out the reaction Endonucleolytic cleavage of RNA, removing extra 3' nucleotides from tRNA precursor, generating 3' termini of tRNAs. A 3'-hydroxy group is left at the tRNA terminus and a 5'-phosphoryl group is left at the trailer molecule.. Zinc phosphodiesterase, which displays some tRNA 3'-processing endonuclease activity. Probably involved in tRNA maturation, by removing a 3'-trailer from precursor tRNA. The chain is Ribonuclease Z from Thermobifida fusca (strain YX).